A 192-amino-acid polypeptide reads, in one-letter code: Putative manganese efflux pump MntP (192 aa).

The next 6 membrane-spanning stretches (helical) occupy residues Leu-3–Phe-23, Phe-38–Leu-58, Gly-61–Ile-81, Val-101–Val-121, Ile-130–Gly-150, and Ile-167–Trp-187.

This sequence belongs to the MntP (TC 9.B.29) family.

It localises to the cell membrane. Functionally, probably functions as a manganese efflux pump. This Methanospirillum hungatei JF-1 (strain ATCC 27890 / DSM 864 / NBRC 100397 / JF-1) protein is Putative manganese efflux pump MntP.